The following is a 156-amino-acid chain: Transcriptional repressor NrdR (156 aa).

A zinc finger lies at 3-34 (CPYCGHLEDRVVDSRETQDGQATRRRRACLSC). The region spanning 49 to 139 (PQVVKKDGRR…VYRAFRDVGE (91 aa)) is the ATP-cone domain.

This sequence belongs to the NrdR family. Requires Zn(2+) as cofactor.

In terms of biological role, negatively regulates transcription of bacterial ribonucleotide reductase nrd genes and operons by binding to NrdR-boxes. This chain is Transcriptional repressor NrdR, found in Anaeromyxobacter dehalogenans (strain 2CP-C).